The primary structure comprises 53 residues: IgW transmembrane form Tm1T3/Tm6T3/Tm3C4 (53 aa).

A disordered region spans residues 1–25 (VQAVPPDVKGEEGKEEVEDMDGDDN). A compositionally biased stretch (acidic residues) spans 13–24 (GKEEVEDMDGDD). A helical transmembrane segment spans residues 29–49 (VAAFAILFILSFLYSTFVTVV).

In terms of tissue distribution, expressed in the spleen, pancreas, peripheral blood lymphocytes and at low levels in the epigonal organ.

Its subcellular location is the membrane. In Ginglymostoma cirratum (Nurse shark), this protein is IgW transmembrane form Tm1T3/Tm6T3/Tm3C4.